Consider the following 407-residue polypeptide: F-box protein SKIP23 (407 aa).

Residues 2–50 (VDWSTLPKDLLDLISKSLESSFDLIQFRSVCSSWRSAAEPKSPLPTHHL) form the F-box domain.

In terms of assembly, part of a SCF (ASK-cullin-F-box) protein ligase complex. Interacts with SKP1A/ASK1.

The protein localises to the nucleus. Its pathway is protein modification; protein ubiquitination. In terms of biological role, component of SCF(ASK-cullin-F-box) E3 ubiquitin ligase complexes, which may mediate the ubiquitination and subsequent proteasomal degradation of target proteins. In Arabidopsis thaliana (Mouse-ear cress), this protein is F-box protein SKIP23 (SKIP23).